A 162-amino-acid chain; its full sequence is Auxin-responsive protein SAUR36 (162 aa).

The protein belongs to the ARG7 family. In terms of tissue distribution, expressed in embryo, endosperm, growing hypocotyls and shoot apical meristems.

Acts a positive regulator of leaf senescence and may mediate auxin-induced leaf senescence. Plays a role in the regulation of seed germination by gibberellins and abscisic acid (ABA). Plays a role in the regulation of light-dependent hypocotyl elongation. This Arabidopsis thaliana (Mouse-ear cress) protein is Auxin-responsive protein SAUR36.